We begin with the raw amino-acid sequence, 279 residues long: Protein PHOTOPERIODIC CONTROL OF HYPOCOTYL 1-LIKE (279 aa).

In terms of assembly, interacts with light-activated phyB. Binds directly to PIF1 and COP1. In terms of processing, ubiquitinated by COP1 in darkness; this leads to proteasomal degradation. As to expression, mainly expressed in cotyledons, hypocotyls, leaves.

The protein localises to the nucleus. Together with PCH1, regulates growth and development adaptation to the ambient environment by controlling negatively phytochrome B (phyB) dark reversion, a temperature-dependent thermal relaxation process during which phyB reverts from the active to the inactive state. Contributes to red (R) light-triggered photomorphogenesis. Promotes various light responses such as seed germination, hypocotyl gravitropism and chlorophyll biosynthesis, via direct interaction with PIF1 and COP1. Prevents DNA-binding ability of PIF1 to negatively regulate the expressions of its target genes. Facilitates the physical interaction between phyB and PIF1 and the subsequent light-induced degradation of PIF1. The sequence is that of Protein PHOTOPERIODIC CONTROL OF HYPOCOTYL 1-LIKE from Arabidopsis thaliana (Mouse-ear cress).